Consider the following 285-residue polypeptide: Enterobactin synthase component B (285 aa).

The interval 2 to 213 is isochorismatase; that stretch reads AIPKLQAYAL…EELLPAPIPA (212 aa). A Carrier domain is found at 209 to 284; sequence APIPASKAAL…AWWKLLSREV (76 aa). 3 residues coordinate Mg(2+): Asp-227, Gly-242, and Asp-244. Ser-245 bears the O-(pantetheine 4'-phosphoryl)serine mark.

It in the N-terminal section; belongs to the isochorismatase family. As to quaternary structure, proteins EntB, EntD, EntE, and EntF form a multienzyme complex called enterobactin synthase. Homodimer. Also forms a specific pairwise interaction with EntC; this interaction likely facilitates substrate channeling to connect the EntB and EntC active sites. Requires Mg(2+) as cofactor. Post-translationally, 4'-phosphopantetheine is transferred from CoA to a specific serine of apo-EntB by EntD. Holo-EntB so formed is then acylated with 2,3-dihydroxybenzoate in a reaction catalyzed by EntE.

Its subcellular location is the cytoplasm. The enzyme catalyses 3 2,3-dihydroxybenzoate + 3 L-serine + 6 ATP = enterobactin + 6 AMP + 6 diphosphate + 4 H(+). The catalysed reaction is isochorismate + H2O = (2S,3S)-2,3-dihydroxy-2,3-dihydrobenzoate + pyruvate. Its pathway is siderophore biosynthesis; enterobactin biosynthesis. In terms of biological role, involved in the biosynthesis of the siderophore enterobactin (enterochelin), which is a macrocyclic trimeric lactone of N-(2,3-dihydroxybenzoyl)-serine. The serine trilactone serves as a scaffolding for the three catechol functionalities that provide hexadentate coordination for the tightly ligated iron(3+) atoms. EntB is a bifunctional protein that serves as an isochorismate lyase and an aryl carrier protein (ArCP). Catalyzes the conversion of isochorismate to 2,3-dihydro-2,3-dihydroxybenzoate (2,3-diDHB), the precursor of 2,3-dihydroxybenzoate (DHB). In the enterobactin assembly, EntB functions as an aryl carrier protein phosphopantetheinylated near the C terminus by EntD to yield holo-EntB, which is then acylated by EntE with 2,3-dihydroxybenzoyl-AMP to form DHB-holo-EntB. Then this product will serve in the formation of the amide bond between 2,3-dihydroxybenzoate (DHB) and L-serine. The chain is Enterobactin synthase component B from Escherichia coli O157:H7.